A 132-amino-acid polypeptide reads, in one-letter code: Translation initiation factor 5A (132 aa).

Residue Lys36 is modified to Hypusine.

The protein belongs to the eIF-5A family.

It is found in the cytoplasm. Functionally, functions by promoting the formation of the first peptide bond. The chain is Translation initiation factor 5A (eIF5A) from Desulfurococcus amylolyticus (strain DSM 18924 / JCM 16383 / VKM B-2413 / 1221n) (Desulfurococcus kamchatkensis).